The primary structure comprises 240 residues: Ribitol-5-phosphate cytidylyltransferase (240 aa).

CTP is bound by residues 8-11 and 81-87; these read FAGG and GETGQMS.

Belongs to the IspD/TarI cytidylyltransferase family. TarI subfamily.

The catalysed reaction is D-ribitol 5-phosphate + CTP + H(+) = CDP-L-ribitol + diphosphate. Its pathway is cell wall biogenesis; poly(ribitol phosphate) teichoic acid biosynthesis. In terms of biological role, catalyzes the transfer of the cytidylyl group of CTP to D-ribitol 5-phosphate. This chain is Ribitol-5-phosphate cytidylyltransferase, found in Streptococcus agalactiae serotype V (strain ATCC BAA-611 / 2603 V/R).